We begin with the raw amino-acid sequence, 505 residues long: AMP phosphorylase (505 aa).

Residues Gly-170, 196-201, and Thr-205 each bind AMP; that span reads SRAITS. Asp-258 serves as the catalytic Proton donor. Ser-266 and Lys-290 together coordinate AMP.

The protein belongs to the thymidine/pyrimidine-nucleoside phosphorylase family. Type 2 subfamily.

It carries out the reaction AMP + phosphate = alpha-D-ribose 1,5-bisphosphate + adenine. The catalysed reaction is CMP + phosphate = cytosine + alpha-D-ribose 1,5-bisphosphate. It catalyses the reaction UMP + phosphate = alpha-D-ribose 1,5-bisphosphate + uracil. Catalyzes the conversion of AMP and phosphate to adenine and ribose 1,5-bisphosphate (R15P). Exhibits phosphorylase activity toward CMP and UMP in addition to AMP. Functions in an archaeal AMP degradation pathway, together with R15P isomerase and RubisCO. The protein is AMP phosphorylase of Methanococcus maripaludis (strain C5 / ATCC BAA-1333).